A 106-amino-acid polypeptide reads, in one-letter code: Replication restart protein PriB (106 aa).

The 100-residue stretch at 4 to 103 (VNRLVLSGTV…LHAEQIELID (100 aa)) folds into the SSB domain.

This sequence belongs to the PriB family. As to quaternary structure, homodimer. Interacts with PriA and DnaT. Component of the replication restart primosome. Primosome assembly occurs via a 'hand-off' mechanism. PriA binds to replication forks, subsequently PriB then DnaT bind; DnaT then displaces ssDNA to generate the helicase loading substrate.

Functionally, involved in the restart of stalled replication forks, which reloads the replicative helicase on sites other than the origin of replication; the PriA-PriB pathway is the major replication restart pathway. During primosome assembly it facilitates complex formation between PriA and DnaT on DNA; stabilizes PriA on DNA. Stimulates the DNA unwinding activity of PriA helicase. The polypeptide is Replication restart protein PriB (Pectobacterium carotovorum subsp. carotovorum (strain PC1)).